Consider the following 252-residue polypeptide: uncharacterized protein (252 aa).

Residues 80-100 traverse the membrane as a helical segment; that stretch reads LSVLVIGSTMFTHAGVLPVLA.

It is found in the host membrane. The protein localises to the virion. This is an uncharacterized protein from Acanthamoeba polyphaga mimivirus (APMV).